Reading from the N-terminus, the 905-residue chain is Cadherin-2B (905 aa).

The signal sequence occupies residues 1-28; the sequence is MCRKQPFLLPTLLGILAALMLQQGPVEA. Positions 29–160 are excised as a propeptide; it reads FGGSRLCKTG…NSNGLQRQKR (132 aa). 5 consecutive Cadherin domains span residues 161–268, 269–383, 384–498, 499–604, and 605–713; these read DWVI…RPEF, LHQI…PPEF, TAMT…NPYF, TPNP…DNAP, and YVYP…TTAP. The Extracellular segment spans residues 161 to 723; it reads DWVIPPINVP…IIGTGLGTGA (563 aa). Glutamate 171 is a Ca(2+) binding site. N-linked (GlcNAc...) asparagine glycosylation occurs at asparagine 191. Aspartate 227, glutamate 229, aspartate 260, methionine 261, asparagine 262, aspartate 263, and asparagine 264 together coordinate Ca(2+). The N-linked (GlcNAc...) asparagine glycan is linked to asparagine 274. Ca(2+)-binding residues include aspartate 294, aspartate 296, and asparagine 302. A glycan (N-linked (GlcNAc...) asparagine) is linked at asparagine 326. Aspartate 354 is a binding site for Ca(2+). N-linked (GlcNAc...) asparagine glycosylation is found at asparagine 403, asparagine 573, asparagine 623, asparagine 651, and asparagine 692. Residues 724–745 form a helical membrane-spanning segment; that stretch reads IIAILLCIIILLTLVLMFVVWM. Over 746–905 the chain is Cytoplasmic; that stretch reads KRRDKERQAK…LADMYGGSDD (160 aa). Disordered stretches follow at residues 774-800 and 862-883; these read EEGGGEEDQDYDLSQLQQPDTMEPDTI and SGSTAGSLSSLNSSSSGGEQDY. Over residues 775 to 784 the composition is skewed to acidic residues; it reads EGGGEEDQDY. A compositionally biased stretch (low complexity) spans 862–879; the sequence is SGSTAGSLSSLNSSSSGG.

As to quaternary structure, homodimer (via extracellular region). Can also form heterodimers with other cadherins (via extracellular region). Dimerization occurs in trans, i.e. with a cadherin chain from another cell.

The protein resides in the cell membrane. It localises to the sarcolemma. Its subcellular location is the cell junction. It is found in the cell surface. The protein localises to the desmosome. The protein resides in the adherens junction. In terms of biological role, calcium-dependent cell adhesion protein; preferentially mediates homotypic cell-cell adhesion. Cadherins may thus contribute to the sorting of heterogeneous cell types, and thereby play an important role during embryonic development. Required for proper neurite branching. Required for pre- and postsynaptic organization. The protein is Cadherin-2B (cdh2-b) of Xenopus laevis (African clawed frog).